The chain runs to 1309 residues: Clustered mitochondria protein homolog (1309 aa).

The segment at 1-34 (MLLNGDCPESLKKEAAAAEPPRENGLDEAGPGDE) is disordered. Basic and acidic residues predominate over residues 9 to 25 (ESLKKEAAAAEPPRENG). Phosphoserine occurs at positions 279 and 281. The Clu domain maps to 335–577 (RAEDAYTSRL…RTFPPDLNFL (243 aa)). Over residues 636–651 (LETPSSLENGGPSSLE) the composition is skewed to polar residues. A disordered region spans residues 636-674 (LETPSSLENGGPSSLESKSEDPPGQEAGSEEEGSSASGL). Serine 654, serine 664, and serine 723 each carry phosphoserine. TPR repeat units lie at residues 978-1011 (AFHFFQSGQAKVQQGFLKEGCELINEALNLFNNV), 1020-1053 (CACLRLLARLHYIMGDYAEALSNQQKAVLMSERV), 1104-1137 (ALLDNNIGLVLHGVMEYDLSLRFLENALAVSTKY), and 1146-1179 (ALSHHLVARVYESKAEFRSALQHEKEGYTIYKTQ). Basic and acidic residues predominate over residues 1264 to 1278 (HQLQEASRNRDRAEE). The segment at 1264 to 1309 (HQLQEASRNRDRAEEPMATEPAPAGAPGDLGSQPPAAKDPSPSVQG) is disordered. Residues 1279–1290 (PMATEPAPAGAP) are compositionally biased toward low complexity.

Belongs to the CLU family.

The protein localises to the cytoplasm. It localises to the cytoplasmic granule. MRNA-binding protein involved in proper cytoplasmic distribution of mitochondria. Specifically binds mRNAs of nuclear-encoded mitochondrial proteins in the cytoplasm and regulates transport or translation of these transcripts close to mitochondria, playing a role in mitochondrial biogenesis. This Homo sapiens (Human) protein is Clustered mitochondria protein homolog (CLUH).